Here is a 277-residue protein sequence, read N- to C-terminus: Co-chaperone protein DjlA (277 aa).

At 1-4 (MWGK) the chain is on the periplasmic side. A helical membrane pass occupies residues 5–28 (ILGAFFGFLLGGPFGLLLGLFLGH). The Cytoplasmic portion of the chain corresponds to 29–277 (KFDKARRNVY…DMIRKEKGFK (249 aa)). The J domain occupies 211–277 (DAYEVLGVTE…DMIRKEKGFK (67 aa)).

In terms of assembly, homodimer.

It localises to the cell inner membrane. Functionally, regulatory DnaK co-chaperone. Direct interaction between DnaK and DjlA is needed for the induction of the wcaABCDE operon, involved in the synthesis of a colanic acid polysaccharide capsule, possibly through activation of the RcsB/RcsC phosphotransfer signaling pathway. The colanic acid capsule may help the bacterium survive conditions outside the host. This is Co-chaperone protein DjlA from Photobacterium profundum (strain SS9).